The sequence spans 221 residues: Factor arrest protein 7 (221 aa).

Component of a complex at least composed of FAR3, FAR7, FAR8, FAR10, FAR11 and VPS64.

In terms of biological role, participates in the control of the reentry into the cell cycle following pheromone treatment. In Saccharomyces cerevisiae (strain ATCC 204508 / S288c) (Baker's yeast), this protein is Factor arrest protein 7 (FAR7).